The sequence spans 172 residues: UPF0102 protein Pcryo_2198 (172 aa).

The protein belongs to the UPF0102 family.

This Psychrobacter cryohalolentis (strain ATCC BAA-1226 / DSM 17306 / VKM B-2378 / K5) protein is UPF0102 protein Pcryo_2198.